A 224-amino-acid chain; its full sequence is Urease accessory protein UreF (224 aa).

It belongs to the UreF family. In terms of assembly, ureD, UreF and UreG form a complex that acts as a GTP-hydrolysis-dependent molecular chaperone, activating the urease apoprotein by helping to assemble the nickel containing metallocenter of UreC. The UreE protein probably delivers the nickel.

It is found in the cytoplasm. Its function is as follows. Required for maturation of urease via the functional incorporation of the urease nickel metallocenter. This Pseudomonas entomophila (strain L48) protein is Urease accessory protein UreF.